A 122-amino-acid polypeptide reads, in one-letter code: Hexon-interlacing protein (122 aa).

A coiled-coil region spans residues valine 72 to alanine 106.

This sequence belongs to the adenoviridae hexon-interlacing protein family. Homotrimer. Interacts with hexon protein; this interaction tethers the hexons together. Self-interacts with adjacent proteins. Interacts with kinesin light chain KLC1; this interaction leads to capsid disruption at the nuclear pore complex during virus entry into host cell.

It localises to the virion. The protein localises to the host nucleus. Structural component of the virion that acts as a cement protein on the capsid exterior and forms triskelion structures consisting of three molecules that stabilize three hexon trimers at the center of each icosahedral facet and fixes the peripentonal hexons. Dispensable for assembly. During virus entry, recruits the anterograde motor kinesin-1 to the capsid docked at the nuclear pore complex thereby subjecting the docked capsid to a pulling force. The resulting tension leads to capsid disruption, dispersion of capsid fragments toward cell periphery and eventually viral DNA entry into the host nucleus. This chain is Hexon-interlacing protein, found in Tupaiidae (tree shrews).